The sequence spans 88 residues: uncharacterized protein (88 aa).

This is an uncharacterized protein from Lymantria dispar multicapsid nuclear polyhedrosis virus (LdMNPV).